The primary structure comprises 328 residues: Methionyl-tRNA formyltransferase (328 aa).

110 to 113 (SNLP) lines the (6S)-5,6,7,8-tetrahydrofolate pocket.

This sequence belongs to the Fmt family.

It carries out the reaction L-methionyl-tRNA(fMet) + (6R)-10-formyltetrahydrofolate = N-formyl-L-methionyl-tRNA(fMet) + (6S)-5,6,7,8-tetrahydrofolate + H(+). Its function is as follows. Attaches a formyl group to the free amino group of methionyl-tRNA(fMet). The formyl group appears to play a dual role in the initiator identity of N-formylmethionyl-tRNA by promoting its recognition by IF2 and preventing the misappropriation of this tRNA by the elongation apparatus. The polypeptide is Methionyl-tRNA formyltransferase (Bifidobacterium longum (strain DJO10A)).